Reading from the N-terminus, the 261-residue chain is uncharacterized protein (261 aa).

It is found in the plastid. The protein resides in the chloroplast. This is an uncharacterized protein from Mesostigma viride (Green alga).